A 68-amino-acid polypeptide reads, in one-letter code: Basic phospholipase A2 homolog BdipTx-I (68 aa).

Residues Cys28 and Cys44 are joined by a disulfide bond.

The protein belongs to the phospholipase A2 family. Group II subfamily. K49 sub-subfamily. Expressed by the venom gland.

The protein resides in the secreted. In terms of biological role, snake venom phospholipase A2 (PLA2) that lacks enzymatic activity. Is myotoxic, induces edema, and causes systemic effects (renal changes that lead to proteinuria) on mice. A model of myotoxic mechanism has been proposed: an apo Lys49-PLA2 is activated by the entrance of a hydrophobic molecule (e.g. fatty acid) at the hydrophobic channel of the protein leading to a reorientation of a monomer. This reorientation causes a transition between 'inactive' to 'active' states, causing alignment of C-terminal and membrane-docking sites (MDoS) side-by-side and putting the membrane-disruption sites (MDiS) in the same plane, exposed to solvent and in a symmetric position for both monomers. The MDoS region stabilizes the toxin on membrane by the interaction of charged residues with phospholipid head groups. Subsequently, the MDiS region destabilizes the membrane with penetration of hydrophobic residues. This insertion causes a disorganization of the membrane, allowing an uncontrolled influx of ions (i.e. calcium and sodium), and eventually triggering irreversible intracellular alterations and cell death. This is Basic phospholipase A2 homolog BdipTx-I from Bothrops diporus (Chaco lancehead).